Reading from the N-terminus, the 422-residue chain is Protein FAM53B (422 aa).

Ser119, Ser168, Ser170, Ser180, Ser213, and Ser269 each carry phosphoserine. Disordered regions lie at residues 193 to 225 and 243 to 269; these read GQPC…GRLD and CPPS…RSRS. The segment covering 244-269 has biased composition (low complexity); the sequence is PPSANSTPASTPELARRSSGLARSRS. The short motif at 282-285 is the Nuclear localization signal element; the sequence is KRRR. Phosphoserine is present on residues Ser335 and Ser344.

Belongs to the FAM53 family. In terms of assembly, interacts with CTNNB1.

It is found in the nucleus. In terms of biological role, acts as a regulator of Wnt signaling pathway by regulating beta-catenin (CTNNB1) nuclear localization. The protein is Protein FAM53B of Mus musculus (Mouse).